We begin with the raw amino-acid sequence, 357 residues long: Peptide chain release factor 1 (357 aa).

Gln-236 carries the N5-methylglutamine modification.

This sequence belongs to the prokaryotic/mitochondrial release factor family. Methylated by PrmC. Methylation increases the termination efficiency of RF1.

The protein resides in the cytoplasm. Functionally, peptide chain release factor 1 directs the termination of translation in response to the peptide chain termination codons UAG and UAA. The polypeptide is Peptide chain release factor 1 (Mycolicibacterium gilvum (strain PYR-GCK) (Mycobacterium gilvum (strain PYR-GCK))).